The following is a 124-amino-acid chain: uncharacterized protein (124 aa).

Interacts with dil1.

This is an uncharacterized protein from Schizosaccharomyces pombe (strain 972 / ATCC 24843) (Fission yeast).